A 188-amino-acid chain; its full sequence is GTP cyclohydrolase 1 (188 aa).

Zn(2+)-binding residues include C78, H81, and C150.

It belongs to the GTP cyclohydrolase I family. As to quaternary structure, homomer.

The enzyme catalyses GTP + H2O = 7,8-dihydroneopterin 3'-triphosphate + formate + H(+). The protein operates within cofactor biosynthesis; 7,8-dihydroneopterin triphosphate biosynthesis; 7,8-dihydroneopterin triphosphate from GTP: step 1/1. This Geobacillus sp. (strain WCH70) protein is GTP cyclohydrolase 1.